A 267-amino-acid chain; its full sequence is 4-hydroxy-tetrahydrodipicolinate reductase (267 aa).

10–15 lines the NAD(+) pocket; sequence GCLGKQ. Arg-37 serves as a coordination point for NADP(+). NAD(+)-binding positions include 99–101 and 122–125; these read GTT and TTNV. The Proton donor/acceptor role is filled by His-154. (S)-2,3,4,5-tetrahydrodipicolinate is bound at residue His-155. The active-site Proton donor is Lys-158. 164 to 165 is a (S)-2,3,4,5-tetrahydrodipicolinate binding site; sequence GT.

Belongs to the DapB family.

The protein localises to the cytoplasm. The catalysed reaction is (S)-2,3,4,5-tetrahydrodipicolinate + NAD(+) + H2O = (2S,4S)-4-hydroxy-2,3,4,5-tetrahydrodipicolinate + NADH + H(+). It carries out the reaction (S)-2,3,4,5-tetrahydrodipicolinate + NADP(+) + H2O = (2S,4S)-4-hydroxy-2,3,4,5-tetrahydrodipicolinate + NADPH + H(+). Its pathway is amino-acid biosynthesis; L-lysine biosynthesis via DAP pathway; (S)-tetrahydrodipicolinate from L-aspartate: step 4/4. Its function is as follows. Catalyzes the conversion of 4-hydroxy-tetrahydrodipicolinate (HTPA) to tetrahydrodipicolinate. This is 4-hydroxy-tetrahydrodipicolinate reductase from Ehrlichia chaffeensis (strain ATCC CRL-10679 / Arkansas).